We begin with the raw amino-acid sequence, 448 residues long: Probable metal transport system membrane protein CPn_0347/CP_0413/CPj0347/CpB0354 (448 aa).

8 consecutive transmembrane segments (helical) span residues 15 to 35 (FLAV…LLIS), 47 to 67 (ASYP…SLQA), 69 to 89 (IFWI…IIVF), 100 to 120 (SALC…ASYV), 144 to 164 (FLEA…LWWW), 193 to 213 (LIFI…VLIS), 233 to 253 (ILIL…YISV), and 270 to 290 (LPTG…CLLF).

The protein belongs to the ABC-3 integral membrane protein family.

The protein resides in the cell inner membrane. In terms of biological role, part of an ATP-driven transport system CPn_0346/CPn_0347/CPn_0348/CPn_0349 for a metal. The chain is Probable metal transport system membrane protein CPn_0347/CP_0413/CPj0347/CpB0354 from Chlamydia pneumoniae (Chlamydophila pneumoniae).